We begin with the raw amino-acid sequence, 518 residues long: MECDLMETDILESLEDLGYKGPLLEDGALSQAVSAGASSPEFTKLCAWLVSELRVLCKLEENVQATNSPSEAEEFQLEVSGLLGEMNCPYLSLTSGDVTKRLLIQKNCLLLLTYLISELEAARMLCVNAPPKKAQEGGGSEVFQELKGICIALGMSKPPANITMFQFFSGIEKKLKETLAKVPPNHVGKPLLKKPMGPAHWEKIEAINQAIANEYEVRRKLLIKRLDVTVQSFGWSDRAKSQTEKLAKVYQPKRSVLSPKTTISVAHLLAARQDLSKILRTSSGSIREKTACAINKVLMGRVPDRGGRPNEIEPPPPEMPPWQKRQDGPQQQTGGRGGGRGGYEHSSYGGRGGHEQGGGRGGRGGYDHGGRGGGRGNKHQGGWTDGGSGGGGGYQDGGYRDSGFQPGGYHGGHSSGGYQGGGYGGFQTSSSYTGSGYQGGGYQQDNRYQDGGHHGDRGGGRGGRGGRGGRGGRAGQGGGWGGRGSQNYHQGGQFEQHFQHGGYQYNHSGFGQGRHYTS.

2 disordered regions span residues 297-415 (VLMG…GHSS) and 434-518 (GSGY…HYTS). The span at 302–311 (VPDRGGRPNE) shows a compositional bias: basic and acidic residues. Gly residues-rich tracts occupy residues 349-364 (GGRGGHEQGGGRGGRG), 383-396 (WTDGGSGGGGGYQD), and 405-415 (QPGGYHGGHSS). Residues 447–459 (RYQDGGHHGDRGG) show a composition bias toward basic and acidic residues. The span at 460-484 (GRGGRGGRGGRGGRAGQGGGWGGRG) shows a compositional bias: gly residues. Positions 488-504 (YHQGGQFEQHFQHGGYQ) are enriched in low complexity. Positions 505-518 (YNHSGFGQGRHYTS) are enriched in polar residues.

Belongs to the FAM98 family. Interacts (via N- and C-terminus) with DDX1. Interacts (via N- and C-terminus) with C14orf166. Interacts with FAM98B. Interacts with PLEKHM1 (via N- and C-terminus). In terms of tissue distribution, expressed strongly in colorectal cancer cells. Expressed strongly in colorectal cancer tissues compared to wild-type colon samples (at protein level). Expressed strongly in colorectal cancer tissues compared to wild-type colon samples.

Positively stimulates PRMT1-induced protein arginine methylation. Involved in skeletal homeostasis. Positively regulates lysosome peripheral distribution and ruffled border formation in osteoclasts. This is Protein FAM98A from Homo sapiens (Human).